A 780-amino-acid chain; its full sequence is Endonuclease MutS2 (780 aa).

334–341 (GPNAGGKT) lines the ATP pocket. Residues 706 to 780 (IDIRGMRSVD…GGSGKTIVEI (75 aa)) enclose the Smr domain.

It belongs to the DNA mismatch repair MutS family. MutS2 subfamily. As to quaternary structure, homodimer. Binds to stalled ribosomes, contacting rRNA.

Functionally, endonuclease that is involved in the suppression of homologous recombination and thus may have a key role in the control of bacterial genetic diversity. Its function is as follows. Acts as a ribosome collision sensor, splitting the ribosome into its 2 subunits. Detects stalled/collided 70S ribosomes which it binds and splits by an ATP-hydrolysis driven conformational change. Acts upstream of the ribosome quality control system (RQC), a ribosome-associated complex that mediates the extraction of incompletely synthesized nascent chains from stalled ribosomes and their subsequent degradation. Probably generates substrates for RQC. The polypeptide is Endonuclease MutS2 (Borreliella burgdorferi (strain ATCC 35210 / DSM 4680 / CIP 102532 / B31) (Borrelia burgdorferi)).